Here is a 222-residue protein sequence, read N- to C-terminus: RING finger protein 141 (222 aa).

Residues 147–184 form an RING-type zinc finger; the sequence is CCICMDGKADLILPCAHSFCQKCIDKWSGQSRNCPVCR.

The chain is RING finger protein 141 (rnf141) from Danio rerio (Zebrafish).